A 235-amino-acid chain; its full sequence is High mobility group protein 1.2 (235 aa).

Over residues M1–Q34 the composition is skewed to polar residues. Residues M1–G47 form a disordered region. 2 DNA-binding regions (HMG box) span residues G47–G117 and P135–K203.

It belongs to the HMGB family.

Its subcellular location is the nucleus. This is High mobility group protein 1.2 (hmg-1.2) from Caenorhabditis elegans.